The chain runs to 431 residues: Arginine biosynthesis bifunctional protein ArgJ, mitochondrial (431 aa).

Residues threonine 174, lysine 200, threonine 211, glutamate 297, asparagine 426, and threonine 431 each contribute to the substrate site. Threonine 211 serves as the catalytic Nucleophile.

Belongs to the ArgJ family. Heterodimer of an alpha and a beta chain. The alpha and beta chains are autoproteolytically processed from a single precursor protein within the mitochondrion.

Its subcellular location is the mitochondrion matrix. It carries out the reaction N(2)-acetyl-L-ornithine + L-glutamate = N-acetyl-L-glutamate + L-ornithine. The catalysed reaction is L-glutamate + acetyl-CoA = N-acetyl-L-glutamate + CoA + H(+). The protein operates within amino-acid biosynthesis; L-arginine biosynthesis; L-ornithine and N-acetyl-L-glutamate from L-glutamate and N(2)-acetyl-L-ornithine (cyclic): step 1/1. Its pathway is amino-acid biosynthesis; L-arginine biosynthesis; N(2)-acetyl-L-ornithine from L-glutamate: step 1/4. In terms of biological role, catalyzes two activities which are involved in the cyclic version of arginine biosynthesis: the synthesis of acetylglutamate from glutamate and acetyl-CoA, and of ornithine by transacetylation between acetylornithine and glutamate. The chain is Arginine biosynthesis bifunctional protein ArgJ, mitochondrial from Yarrowia lipolytica (strain CLIB 122 / E 150) (Yeast).